The chain runs to 258 residues: Imidazole glycerol phosphate synthase subunit HisF (258 aa).

Residues D11 and D130 contribute to the active site.

This sequence belongs to the HisA/HisF family. As to quaternary structure, heterodimer of HisH and HisF.

It localises to the cytoplasm. It catalyses the reaction 5-[(5-phospho-1-deoxy-D-ribulos-1-ylimino)methylamino]-1-(5-phospho-beta-D-ribosyl)imidazole-4-carboxamide + L-glutamine = D-erythro-1-(imidazol-4-yl)glycerol 3-phosphate + 5-amino-1-(5-phospho-beta-D-ribosyl)imidazole-4-carboxamide + L-glutamate + H(+). It participates in amino-acid biosynthesis; L-histidine biosynthesis; L-histidine from 5-phospho-alpha-D-ribose 1-diphosphate: step 5/9. IGPS catalyzes the conversion of PRFAR and glutamine to IGP, AICAR and glutamate. The HisF subunit catalyzes the cyclization activity that produces IGP and AICAR from PRFAR using the ammonia provided by the HisH subunit. This is Imidazole glycerol phosphate synthase subunit HisF from Yersinia enterocolitica serotype O:8 / biotype 1B (strain NCTC 13174 / 8081).